We begin with the raw amino-acid sequence, 382 residues long: S-adenosylmethionine synthase (382 aa).

Residue His-15 coordinates ATP. Asp-17 is a binding site for Mg(2+). Glu-43 lines the K(+) pocket. Residues Glu-56 and Gln-99 each coordinate L-methionine. The flexible loop stretch occupies residues 99–109 (QSPDINQGVDR). ATP is bound by residues 164–166 (DAK), 230–231 (RF), Asp-239, 245–246 (RK), Ala-262, and Lys-266. Residue Asp-239 participates in L-methionine binding. L-methionine is bound at residue Lys-270.

This sequence belongs to the AdoMet synthase family. Homotetramer; dimer of dimers. It depends on Mg(2+) as a cofactor. The cofactor is K(+).

It localises to the cytoplasm. It catalyses the reaction L-methionine + ATP + H2O = S-adenosyl-L-methionine + phosphate + diphosphate. It functions in the pathway amino-acid biosynthesis; S-adenosyl-L-methionine biosynthesis; S-adenosyl-L-methionine from L-methionine: step 1/1. Catalyzes the formation of S-adenosylmethionine (AdoMet) from methionine and ATP. The overall synthetic reaction is composed of two sequential steps, AdoMet formation and the subsequent tripolyphosphate hydrolysis which occurs prior to release of AdoMet from the enzyme. The chain is S-adenosylmethionine synthase from Glaesserella parasuis serovar 5 (strain SH0165) (Haemophilus parasuis).